We begin with the raw amino-acid sequence, 152 residues long: Xanthine-guanine phosphoribosyltransferase (152 aa).

Residues 37-38 (RG), Arg69, and 88-96 (DDLVDTGGT) contribute to the 5-phospho-alpha-D-ribose 1-diphosphate site. GMP is bound at residue Arg69. Asp89 lines the Mg(2+) pocket. Positions 92 and 135 each coordinate guanine. Residues Asp92 and Ile135 each coordinate xanthine. GMP-binding positions include 92 to 96 (DTGGT) and 134 to 135 (WI).

It belongs to the purine/pyrimidine phosphoribosyltransferase family. XGPT subfamily. As to quaternary structure, homotetramer. The cofactor is Mg(2+).

It localises to the cell inner membrane. The enzyme catalyses GMP + diphosphate = guanine + 5-phospho-alpha-D-ribose 1-diphosphate. The catalysed reaction is XMP + diphosphate = xanthine + 5-phospho-alpha-D-ribose 1-diphosphate. It carries out the reaction IMP + diphosphate = hypoxanthine + 5-phospho-alpha-D-ribose 1-diphosphate. It functions in the pathway purine metabolism; GMP biosynthesis via salvage pathway; GMP from guanine: step 1/1. Its pathway is purine metabolism; XMP biosynthesis via salvage pathway; XMP from xanthine: step 1/1. Functionally, purine salvage pathway enzyme that catalyzes the transfer of the ribosyl-5-phosphate group from 5-phospho-alpha-D-ribose 1-diphosphate (PRPP) to the N9 position of the 6-oxopurines guanine and xanthine to form the corresponding ribonucleotides GMP (guanosine 5'-monophosphate) and XMP (xanthosine 5'-monophosphate), with the release of PPi. To a lesser extent, also acts on hypoxanthine. This is Xanthine-guanine phosphoribosyltransferase from Shigella boydii serotype 4 (strain Sb227).